A 278-amino-acid chain; its full sequence is Dermonecrotic toxin LhSicTox-alphaIV1ii (278 aa).

H5 is an active-site residue. Mg(2+) contacts are provided by E25 and D27. The active-site Nucleophile is H41. Disulfide bonds link C45–C51 and C47–C192. Residue D85 participates in Mg(2+) binding.

This sequence belongs to the arthropod phospholipase D family. Class II subfamily. Mg(2+) serves as cofactor. As to expression, expressed by the venom gland.

Its subcellular location is the secreted. It catalyses the reaction an N-(acyl)-sphingosylphosphocholine = an N-(acyl)-sphingosyl-1,3-cyclic phosphate + choline. The enzyme catalyses an N-(acyl)-sphingosylphosphoethanolamine = an N-(acyl)-sphingosyl-1,3-cyclic phosphate + ethanolamine. The catalysed reaction is a 1-acyl-sn-glycero-3-phosphocholine = a 1-acyl-sn-glycero-2,3-cyclic phosphate + choline. It carries out the reaction a 1-acyl-sn-glycero-3-phosphoethanolamine = a 1-acyl-sn-glycero-2,3-cyclic phosphate + ethanolamine. In terms of biological role, dermonecrotic toxins cleave the phosphodiester linkage between the phosphate and headgroup of certain phospholipids (sphingolipid and lysolipid substrates), forming an alcohol (often choline) and a cyclic phosphate. This toxin acts on sphingomyelin (SM). It may also act on ceramide phosphoethanolamine (CPE), lysophosphatidylcholine (LPC) and lysophosphatidylethanolamine (LPE), but not on lysophosphatidylserine (LPS), and lysophosphatidylglycerol (LPG). It acts by transphosphatidylation, releasing exclusively cyclic phosphate products as second products. Induces dermonecrosis, hemolysis, increased vascular permeability, edema, inflammatory response, and platelet aggregation. The chain is Dermonecrotic toxin LhSicTox-alphaIV1ii from Loxosceles hirsuta (Recluse spider).